Consider the following 339-residue polypeptide: Anthranilate phosphoribosyltransferase (339 aa).

Residues Gly79, 82-83 (GD), Thr87, 89-92 (NIST), 107-115 (KHGNRAVSS), and Ser119 each bind 5-phospho-alpha-D-ribose 1-diphosphate. Gly79 contacts anthranilate. A Mg(2+)-binding site is contributed by Ser91. Asn110 lines the anthranilate pocket. Residue Arg165 coordinates anthranilate. Mg(2+) is bound by residues Asp224 and Glu225.

This sequence belongs to the anthranilate phosphoribosyltransferase family. In terms of assembly, homodimer. Mg(2+) is required as a cofactor.

It carries out the reaction N-(5-phospho-beta-D-ribosyl)anthranilate + diphosphate = 5-phospho-alpha-D-ribose 1-diphosphate + anthranilate. It participates in amino-acid biosynthesis; L-tryptophan biosynthesis; L-tryptophan from chorismate: step 2/5. Functionally, catalyzes the transfer of the phosphoribosyl group of 5-phosphorylribose-1-pyrophosphate (PRPP) to anthranilate to yield N-(5'-phosphoribosyl)-anthranilate (PRA). This is Anthranilate phosphoribosyltransferase from Geobacillus thermodenitrificans (strain NG80-2).